Here is a 203-residue protein sequence, read N- to C-terminus: MDVHDIAGTAVAGSPAPVPRARPPRPGKSMLQDVEQIRLAIEMIGLGARLQVLESEVSLPRVRLIRLYKELCGVSPPKGMLPFSTDWFVSWRPNAHASMLLGAYRFMTSRGSLDGIRAVLSSYRMYREQLCATGEASQLSFTRAWTLVRFYERGMLRLARCRDCRGEYVVQADDARHRYVCGLCLPPARAGKGRKPAPAALAG.

Positions 161, 164, 181, and 184 each coordinate Zn(2+).

This sequence belongs to the FlhC family. Heterohexamer composed of two FlhC and four FlhD subunits. Each FlhC binds a FlhD dimer, forming a heterotrimer, and a hexamer assembles by dimerization of two heterotrimers. Zn(2+) serves as cofactor.

It is found in the cytoplasm. Functionally, functions in complex with FlhD as a master transcriptional regulator that regulates transcription of several flagellar and non-flagellar operons by binding to their promoter region. Activates expression of class 2 flagellar genes, including fliA, which is a flagellum-specific sigma factor that turns on the class 3 genes. Also regulates genes whose products function in a variety of physiological pathways. The protein is Flagellar transcriptional regulator FlhC of Cupriavidus necator (strain ATCC 17699 / DSM 428 / KCTC 22496 / NCIMB 10442 / H16 / Stanier 337) (Ralstonia eutropha).